Here is a 75-residue protein sequence, read N- to C-terminus: Conotoxin TsMEKL-011 (75 aa).

A signal peptide spans 1–19 (MEKLTILLLVAAVLMSTQA). A propeptide spanning residues 20 to 45 (LIQRGGAKRRKVNFFSIREPGAEDWR) is cleaved from the precursor. 3 disulfides stabilise this stretch: Cys49/Cys63, Cys56/Cys67, and Cys62/Cys71.

Belongs to the conotoxin O2 superfamily. Expressed by the venom duct.

The protein localises to the secreted. In Conus tessulatus (Tessellate cone), this protein is Conotoxin TsMEKL-011.